Consider the following 311-residue polypeptide: Pyrimidine-specific ribonucleoside hydrolase RihA (311 aa).

Histidine 240 is a catalytic residue.

This sequence belongs to the IUNH family. RihA subfamily.

Hydrolyzes with equal efficiency cytidine or uridine to ribose and cytosine or uracil, respectively. In Escherichia coli O8 (strain IAI1), this protein is Pyrimidine-specific ribonucleoside hydrolase RihA.